Consider the following 244-residue polypeptide: Phosphoribosyl isomerase A (244 aa).

The Proton acceptor role is filled by D10. D129 acts as the Proton donor in catalysis.

The protein belongs to the HisA/HisF family.

Its subcellular location is the cytoplasm. The enzyme catalyses 1-(5-phospho-beta-D-ribosyl)-5-[(5-phospho-beta-D-ribosylamino)methylideneamino]imidazole-4-carboxamide = 5-[(5-phospho-1-deoxy-D-ribulos-1-ylimino)methylamino]-1-(5-phospho-beta-D-ribosyl)imidazole-4-carboxamide. It catalyses the reaction N-(5-phospho-beta-D-ribosyl)anthranilate = 1-(2-carboxyphenylamino)-1-deoxy-D-ribulose 5-phosphate. The protein operates within amino-acid biosynthesis; L-histidine biosynthesis; L-histidine from 5-phospho-alpha-D-ribose 1-diphosphate: step 4/9. Its pathway is amino-acid biosynthesis; L-tryptophan biosynthesis; L-tryptophan from chorismate: step 3/5. In terms of biological role, involved in both the histidine and tryptophan biosynthetic pathways. This chain is Phosphoribosyl isomerase A (priA), found in Mycobacterium leprae (strain TN).